A 132-amino-acid polypeptide reads, in one-letter code: Small ribosomal subunit protein uS8 (132 aa).

This sequence belongs to the universal ribosomal protein uS8 family. As to quaternary structure, part of the 30S ribosomal subunit. Contacts proteins S5 and S12.

Functionally, one of the primary rRNA binding proteins, it binds directly to 16S rRNA central domain where it helps coordinate assembly of the platform of the 30S subunit. The sequence is that of Small ribosomal subunit protein uS8 from Azorhizobium caulinodans (strain ATCC 43989 / DSM 5975 / JCM 20966 / LMG 6465 / NBRC 14845 / NCIMB 13405 / ORS 571).